A 599-amino-acid chain; its full sequence is Aspartate--tRNA ligase (599 aa).

Glu-175 contacts L-aspartate. The tract at residues 199–202 (QQFK) is aspartate. L-aspartate contacts are provided by Arg-221 and His-446. An ATP-binding site is contributed by 221–223 (RDE). Residue Glu-480 coordinates ATP. An L-aspartate-binding site is contributed by Arg-487. 532–535 (GVDR) contacts ATP.

This sequence belongs to the class-II aminoacyl-tRNA synthetase family. Type 1 subfamily. In terms of assembly, homodimer.

The protein localises to the cytoplasm. The enzyme catalyses tRNA(Asp) + L-aspartate + ATP = L-aspartyl-tRNA(Asp) + AMP + diphosphate. Catalyzes the attachment of L-aspartate to tRNA(Asp) in a two-step reaction: L-aspartate is first activated by ATP to form Asp-AMP and then transferred to the acceptor end of tRNA(Asp). The sequence is that of Aspartate--tRNA ligase from Streptomyces griseus subsp. griseus (strain JCM 4626 / CBS 651.72 / NBRC 13350 / KCC S-0626 / ISP 5235).